Consider the following 435-residue polypeptide: Salicylate hydroxylase (435 aa).

12–41 contributes to the FAD binding site; sequence RVAIVGGGISGLALALSLCKHSHLNVQLFE.

FAD serves as cofactor.

The enzyme catalyses salicylate + NADH + O2 + 2 H(+) = catechol + CO2 + NAD(+) + H2O. Its pathway is aromatic compound metabolism; naphthalene degradation. This Pseudomonas putida (Arthrobacter siderocapsulatus) protein is Salicylate hydroxylase (nahG).